Reading from the N-terminus, the 67-residue chain is Sec-independent protein translocase protein TatA (67 aa).

Residues 1–21 form a helical membrane-spanning segment; that stretch reads MFGIGIQELLVVLVLVLLVFG. The interval 46 to 67 is disordered; that stretch reads PDEIDITPGKKNGKTDKDDKQA. Basic and acidic residues predominate over residues 58-67; the sequence is GKTDKDDKQA.

Belongs to the TatA/E family. In terms of assembly, the Tat system comprises two distinct complexes: a TatABC complex, containing multiple copies of TatA, TatB and TatC subunits, and a separate TatA complex, containing only TatA subunits. Substrates initially bind to the TatABC complex, which probably triggers association of the separate TatA complex to form the active translocon.

It is found in the cell inner membrane. Part of the twin-arginine translocation (Tat) system that transports large folded proteins containing a characteristic twin-arginine motif in their signal peptide across membranes. TatA could form the protein-conducting channel of the Tat system. The polypeptide is Sec-independent protein translocase protein TatA (Nitratidesulfovibrio vulgaris (strain DSM 19637 / Miyazaki F) (Desulfovibrio vulgaris)).